Consider the following 684-residue polypeptide: Glycine--tRNA ligase beta subunit (684 aa).

This sequence belongs to the class-II aminoacyl-tRNA synthetase family. In terms of assembly, tetramer of two alpha and two beta subunits.

The protein localises to the cytoplasm. The enzyme catalyses tRNA(Gly) + glycine + ATP = glycyl-tRNA(Gly) + AMP + diphosphate. The protein is Glycine--tRNA ligase beta subunit of Pseudomonas entomophila (strain L48).